The sequence spans 363 residues: Large ribosomal subunit protein uL4A (363 aa).

Serine 87 carries the phosphoserine modification. Residues 280 to 363 (PENIISNADV…EKFLTVLHEN (84 aa)) are C-terminal-extended nuclear localization signal.

This sequence belongs to the universal ribosomal protein uL4 family. In terms of assembly, component of the large ribosomal subunit (LSU). Mature yeast ribosomes consist of a small (40S) and a large (60S) subunit. The 40S small subunit contains 1 molecule of ribosomal RNA (18S rRNA) and at least 33 different proteins. The large 60S subunit contains 3 rRNA molecules (25S, 5.8S and 5S rRNA) and at least 46 different proteins. uL4 is associated with the polypeptide exit tunnel. uL4 interacts with its chaperone ACL4 and the nuclear import receptor KAP104.

Its subcellular location is the cytoplasm. It localises to the nucleus. Component of the ribosome, a large ribonucleoprotein complex responsible for the synthesis of proteins in the cell. The small ribosomal subunit (SSU) binds messenger RNAs (mRNAs) and translates the encoded message by selecting cognate aminoacyl-transfer RNA (tRNA) molecules. The large subunit (LSU) contains the ribosomal catalytic site termed the peptidyl transferase center (PTC), which catalyzes the formation of peptide bonds, thereby polymerizing the amino acids delivered by tRNAs into a polypeptide chain. The nascent polypeptides leave the ribosome through a tunnel in the LSU and interact with protein factors that function in enzymatic processing, targeting, and the membrane insertion of nascent chains at the exit of the ribosomal tunnel. uL4 participates in the regulation of the accumulation of its own mRNA. This Schizosaccharomyces pombe (strain 972 / ATCC 24843) (Fission yeast) protein is Large ribosomal subunit protein uL4A (rpl402).